The following is a 309-amino-acid chain: Homoserine kinase (309 aa).

91-101 (PIGSGLGSSAC) serves as a coordination point for ATP.

Belongs to the GHMP kinase family. Homoserine kinase subfamily.

The protein localises to the cytoplasm. The catalysed reaction is L-homoserine + ATP = O-phospho-L-homoserine + ADP + H(+). It functions in the pathway amino-acid biosynthesis; L-threonine biosynthesis; L-threonine from L-aspartate: step 4/5. In terms of biological role, catalyzes the ATP-dependent phosphorylation of L-homoserine to L-homoserine phosphate. The polypeptide is Homoserine kinase (Escherichia fergusonii (strain ATCC 35469 / DSM 13698 / CCUG 18766 / IAM 14443 / JCM 21226 / LMG 7866 / NBRC 102419 / NCTC 12128 / CDC 0568-73)).